The chain runs to 509 residues: Ethanolamine-phosphate phospho-lyase (509 aa).

Position 279 is an N6-(pyridoxal phosphate)lysine (Lys-279). Over residues 451 to 474 (EKTSAKRKVHNENSGDTNAKEKET) the composition is skewed to basic and acidic residues. The tract at residues 451 to 509 (EKTSAKRKVHNENSGDTNAKEKETCSSNSQERNPNDHAYRQSNGLHPESPTFTRKRIRT) is disordered.

This sequence belongs to the class-III pyridoxal-phosphate-dependent aminotransferase family. In terms of assembly, homotetramer. It depends on pyridoxal 5'-phosphate as a cofactor.

The protein localises to the mitochondrion. The catalysed reaction is phosphoethanolamine + H2O = acetaldehyde + NH4(+) + phosphate. Catalyzes the pyridoxal-phosphate-dependent breakdown of phosphoethanolamine, converting it to ammonia, inorganic phosphate and acetaldehyde. This Xenopus laevis (African clawed frog) protein is Ethanolamine-phosphate phospho-lyase (etnppl).